The chain runs to 958 residues: Eukaryotic translation initiation factor 3 subunit A (958 aa).

A coiled-coil region spans residues methionine 93–lysine 123. The 198-residue stretch at leucine 316–leucine 513 folds into the PCI domain. Coiled coils occupy residues glutamate 548–glutamate 696 and leucine 796–serine 861. Residues lysine 804–arginine 859 are compositionally biased toward basic and acidic residues. The tract at residues lysine 804–arginine 958 is disordered. The segment covering proline 877–proline 894 has biased composition (low complexity). The span at lysine 929–proline 942 shows a compositional bias: basic and acidic residues. The segment covering glycine 946–arginine 958 has biased composition (polar residues).

Belongs to the eIF-3 subunit A family. As to quaternary structure, component of the eukaryotic translation initiation factor 3 (eIF-3) complex.

The protein resides in the cytoplasm. RNA-binding component of the eukaryotic translation initiation factor 3 (eIF-3) complex, which is involved in protein synthesis of a specialized repertoire of mRNAs and, together with other initiation factors, stimulates binding of mRNA and methionyl-tRNAi to the 40S ribosome. The eIF-3 complex specifically targets and initiates translation of a subset of mRNAs involved in cell proliferation. This Nicotiana tabacum (Common tobacco) protein is Eukaryotic translation initiation factor 3 subunit A (TIF3A1).